The following is a 140-amino-acid chain: UPF0132 membrane protein MJ1527 (140 aa).

The next 3 membrane-spanning stretches (helical) occupy residues Met-40 to Glu-60, Ala-70 to Ile-90, and Ile-92 to Gly-112.

This sequence belongs to the UPF0132 family.

It localises to the cell membrane. In Methanocaldococcus jannaschii (strain ATCC 43067 / DSM 2661 / JAL-1 / JCM 10045 / NBRC 100440) (Methanococcus jannaschii), this protein is UPF0132 membrane protein MJ1527.